An 83-amino-acid polypeptide reads, in one-letter code: Large ribosomal subunit protein eL43 (83 aa).

Residues C38, C41, C56, and C59 each contribute to the Zn(2+) site. Residues 38 to 59 (CPVCGRKAVKRISTGIWQCQKC) form a C4-type zinc finger.

This sequence belongs to the eukaryotic ribosomal protein eL43 family. Putative zinc-binding subfamily. Part of the 50S ribosomal subunit. Zn(2+) serves as cofactor.

Functionally, binds to the 23S rRNA. The polypeptide is Large ribosomal subunit protein eL43 (Pyrococcus furiosus (strain ATCC 43587 / DSM 3638 / JCM 8422 / Vc1)).